A 389-amino-acid chain; its full sequence is 8-amino-7-oxononanoate synthase (389 aa).

Residue R31 participates in substrate binding. G109–Y110 provides a ligand contact to pyridoxal 5'-phosphate. H134 provides a ligand contact to substrate. Residues S180, D205–H208, and T236–K239 each bind pyridoxal 5'-phosphate. An N6-(pyridoxal phosphate)lysine modification is found at K239. A substrate-binding site is contributed by T349.

This sequence belongs to the class-II pyridoxal-phosphate-dependent aminotransferase family. BioF subfamily. As to quaternary structure, homodimer. Pyridoxal 5'-phosphate is required as a cofactor.

The enzyme catalyses 6-carboxyhexanoyl-[ACP] + L-alanine + H(+) = (8S)-8-amino-7-oxononanoate + holo-[ACP] + CO2. The protein operates within cofactor biosynthesis; biotin biosynthesis. Functionally, catalyzes the decarboxylative condensation of pimeloyl-[acyl-carrier protein] and L-alanine to produce 8-amino-7-oxononanoate (AON), [acyl-carrier protein], and carbon dioxide. In Mycobacterium ulcerans (strain Agy99), this protein is 8-amino-7-oxononanoate synthase.